Consider the following 355-residue polypeptide: tRNA uridine(34) hydroxylase (355 aa).

The Rhodanese domain occupies 146–240 (DDPDTVFVDM…YARQAKAQGL (95 aa)). C200 functions as the Cysteine persulfide intermediate in the catalytic mechanism.

Belongs to the TrhO family.

It catalyses the reaction uridine(34) in tRNA + AH2 + O2 = 5-hydroxyuridine(34) in tRNA + A + H2O. Catalyzes oxygen-dependent 5-hydroxyuridine (ho5U) modification at position 34 in tRNAs. This Pectobacterium atrosepticum (strain SCRI 1043 / ATCC BAA-672) (Erwinia carotovora subsp. atroseptica) protein is tRNA uridine(34) hydroxylase.